A 363-amino-acid chain; its full sequence is mRNA decay activator protein ZFP36L2-A (363 aa).

Positions 131–136 (RYKTEL) match the RNA-binding motif. 2 consecutive C3H1-type zinc fingers follow at residues 131 to 159 (RYKT…HGFH) and 169 to 197 (KYKT…HNAE). Positions 148–189 (YGEKCQFAHGFHELRSLTRHPKYKTELCRTFHTIGFCPYGPR) are RNA-binding. Positions 308-349 (ESPVFDAPPSPPDSLSDRDSYLSGSLSSGSLSGSDSPTLDSN) are disordered. A compositionally biased stretch (low complexity) spans 328–347 (YLSGSLSSGSLSGSDSPTLD).

Post-translationally, phosphorylated. Widely expressed in adults.

It is found in the nucleus. The protein resides in the cytoplasm. In terms of biological role, zinc-finger RNA-binding protein that destabilizes several cytoplasmic AU-rich element (ARE)-containing mRNA transcripts by promoting their poly(A) tail removal or deadenylation, and hence provide a mechanism for attenuating protein synthesis. Acts as a 3'-untranslated region (UTR) ARE mRNA-binding adapter protein to communicate signaling events to the mRNA decay machinery. Functions by recruiting the CCR4-NOT deadenylase complex and probably other components of the cytoplasmic RNA decay machinery to the bound ARE-containing mRNAs, and hence promotes ARE-mediated mRNA deadenylation and decay processes. Binds to 3'-UTR ARE of numerous mRNAs. Also induces the degradation of ARE-containing mRNAs even in absence of poly(A) tail. Required for tubulogenesis during pronephros development. The chain is mRNA decay activator protein ZFP36L2-A (zfp36l2-A) from Xenopus laevis (African clawed frog).